The sequence spans 957 residues: ERC protein 2 (957 aa).

Polar residues predominate over residues 1 to 13 (MYGSARTITNLEG). Residues 1–44 (MYGSARTITNLEGSPSRSPRLPRSPRLGHRRTSSGGGGGTGKTL) are disordered. The segment covering 14–25 (SPSRSPRLPRSP) has biased composition (low complexity). Ser65 and Ser666 each carry phosphoserine. The stretch at 140–917 (RQVRDSTMLD…RMKLMADNYD (778 aa)) forms a coiled coil. The disordered stretch occupies residues 918-957 (DDHHHYHHHHHHHHHRSPGRSQHSNHRPSPDQDDEEGIWA). Residues 922 to 943 (HYHHHHHHHHHRSPGRSQHSNH) show a composition bias toward basic residues. Residues 948-957 (DQDDEEGIWA) are compositionally biased toward acidic residues.

As to quaternary structure, interacts with BSN, ERC1, PPFIA1, PPFIA2, PPFIA3 and PPFIA4. Interacts through its C-terminus with the PDZ domain of RIMS1. Part of a complex consisting of ERC2, RIMS1 and UNC13A.

Its subcellular location is the cytoplasm. It localises to the synapse. It is found in the presynaptic active zone. The protein resides in the cytoskeleton. In terms of biological role, thought to be involved in the organization of the cytomatrix at the nerve terminals active zone (CAZ) which regulates neurotransmitter release. Seems to act together with BSN. May recruit liprin-alpha proteins to the CAZ. This is ERC protein 2 (ERC2) from Homo sapiens (Human).